Here is a 529-residue protein sequence, read N- to C-terminus: Peptide chain release factor 3 (529 aa).

Residues 11–280 form the tr-type G domain; that stretch reads AKRRTFAIIS…GLVEWAPAPM (270 aa). Residues 20–27, 88–92, and 142–145 each bind GTP; these read SHPDAGKT, DTPGH, and NKLD.

The protein belongs to the TRAFAC class translation factor GTPase superfamily. Classic translation factor GTPase family. PrfC subfamily.

It localises to the cytoplasm. Its function is as follows. Increases the formation of ribosomal termination complexes and stimulates activities of RF-1 and RF-2. It binds guanine nucleotides and has strong preference for UGA stop codons. It may interact directly with the ribosome. The stimulation of RF-1 and RF-2 is significantly reduced by GTP and GDP, but not by GMP. In Yersinia pseudotuberculosis serotype O:1b (strain IP 31758), this protein is Peptide chain release factor 3.